The sequence spans 78 residues: UPF0369 protein RP167 (78 aa).

This sequence belongs to the SDHAF4 family.

The polypeptide is UPF0369 protein RP167 (Rickettsia prowazekii (strain Madrid E)).